The following is a 149-amino-acid chain: MGPKVRIMRKEENKAIVSIQAWWRGTLVRRTLLHAALRAWIIQCWWKQKLVLLMENRRRVALDAFARQEWAVVKLQSWVRMWCIRLRYLRLLHAVRIIQVYWRWHSCHTRGFIQGHYDLKENQLNLQLEISLGSQACRVQQCIPLPIKE.

2 consecutive IQ domains span residues 12 to 41 (ENKA…RAWI) and 68 to 97 (QEWA…AVRI).

The chain is IQ domain-containing protein F5 (IQCF5) from Bos taurus (Bovine).